The chain runs to 67 residues: ATP synthase protein 8 (67 aa).

The helical transmembrane segment at 8–24 threads the bilayer; that stretch reads TWFITILATILTLFIIM. Position 54 is an N6-acetyllysine; alternate (Lys-54). Lys-54 is subject to N6-succinyllysine; alternate. At Lys-57 the chain carries N6-acetyllysine.

It belongs to the ATPase protein 8 family. F-type ATPases have 2 components, CF(1) - the catalytic core - and CF(0) - the membrane proton channel. Component of an ATP synthase complex composed of ATP5PB, ATP5MC1, ATP5F1E, ATP5PD, ATP5ME, ATP5PF, ATP5MF, MT-ATP6, MT-ATP8, ATP5F1A, ATP5F1B, ATP5F1D, ATP5F1C, ATP5PO, ATP5MG, ATP5MK and ATP5MJ. Interacts with PRICKLE3.

The protein resides in the mitochondrion membrane. In terms of biological role, mitochondrial membrane ATP synthase (F(1)F(0) ATP synthase or Complex V) produces ATP from ADP in the presence of a proton gradient across the membrane which is generated by electron transport complexes of the respiratory chain. F-type ATPases consist of two structural domains, F(1) - containing the extramembraneous catalytic core and F(0) - containing the membrane proton channel, linked together by a central stalk and a peripheral stalk. During catalysis, ATP synthesis in the catalytic domain of F(1) is coupled via a rotary mechanism of the central stalk subunits to proton translocation. Part of the complex F(0) domain. Minor subunit located with subunit a in the membrane. The polypeptide is ATP synthase protein 8 (MT-ATP8) (Artibeus jamaicensis (Jamaican fruit-eating bat)).